The chain runs to 792 residues: Cadherin-11 (792 aa).

An N-terminal signal peptide occupies residues 1–22 (MKEDNCLHAALICLGMLYYSHA). Residues 23–53 (ITTEKLNHVRPSLHGHHEKGKEGQVLHRSKR) constitute a propeptide that is removed on maturation. Cadherin domains are found at residues 54–159 (GWVW…PPEF), 160–268 (LHEN…PPKF), 269–383 (PQSV…PPVF), 384–486 (LKPS…DNAP), and 487–608 (KFAA…YILN). The Extracellular segment spans residues 54 to 613 (GWVWNQFFVI…AYILNAGLST (560 aa)). N455, N536, and N594 each carry an N-linked (GlcNAc...) asparagine glycan. The helical transmembrane segment at 614–634 (GALIAILACIVILLVIVVLFV) threads the bilayer. At 635 to 792 (TLKRQKKEPL…GSKDTFDDDS (158 aa)) the chain is on the cytoplasmic side.

Its subcellular location is the cell membrane. Functionally, cadherins are calcium-dependent cell adhesion proteins. They preferentially interact with themselves in a homophilic manner in connecting cells; cadherins may thus contribute to the sorting of heterogeneous cell types. Required for proper focal adhesion assembly. Involved in the regulation of cell migration. The polypeptide is Cadherin-11 (CDH11) (Gallus gallus (Chicken)).